The sequence spans 162 residues: Large ribosomal subunit protein uL10 (162 aa).

Belongs to the universal ribosomal protein uL10 family. In terms of assembly, part of the ribosomal stalk of the 50S ribosomal subunit. The N-terminus interacts with L11 and the large rRNA to form the base of the stalk. The C-terminus forms an elongated spine to which L12 dimers bind in a sequential fashion forming a multimeric L10(L12)X complex.

Its function is as follows. Forms part of the ribosomal stalk, playing a central role in the interaction of the ribosome with GTP-bound translation factors. The protein is Large ribosomal subunit protein uL10 of Borrelia duttonii (strain Ly).